A 327-amino-acid polypeptide reads, in one-letter code: Movement protein (327 aa).

The stretch at 297 to 327 (SASSSNTENELARVSQNIDLLKNKLKEICGE) forms a coiled coil.

It belongs to the caulimoviridae movement protein family. As to quaternary structure, homotrimer, through the coiled-coil domain. Interacts with VAP. May interact (via N-terminus) with host prenylated Rab acceptor protein 1D (PRA1D).

The protein resides in the host cell junction. The protein localises to the host plasmodesma. In terms of biological role, transports viral genome to neighboring plant cells directly through plasmosdesmata, without any budding. The movement protein allows efficient cell to cell propagation, by bypassing the host cell wall barrier. Acts by forming tubules structures that increase the size exclusion limit (SEL) of plasmodesmata, thereby allowing viral ribonucleocapsids to spread directly to neighboring cells. In Cauliflower mosaic virus (strain Strasbourg) (CaMV), this protein is Movement protein.